A 247-amino-acid chain; its full sequence is Protein lin-28 homolog B (247 aa).

The interval 1-22 (MAEGGASKGEEPEKLPGLAEDE) is disordered. Positions 27–100 (HGTGHCKWFN…GLESIRVTGP (74 aa)) constitute a CSD domain. Ser-94, Ser-103, and Ser-108 each carry phosphoserine. The tract at residues 96–124 (RVTGPGGSPCLGSERRPKGKTLQKRKPKG) is disordered. The segment covering 112-123 (PKGKTLQKRKPK) has biased composition (basic residues). CCHC-type zinc fingers lie at residues 125 to 142 (DRCY…ECSL) and 147 to 164 (KKCH…NCPH). Zn(2+) is bound by residues Cys-127, Cys-130, His-135, Cys-140, Cys-149, Cys-152, His-157, and Cys-162. Residues 173–186 (SSQGRQEAESQPCS) show a composition bias toward polar residues. The tract at residues 173–247 (SSQGRQEAES…GPLIQKRKKT (75 aa)) is disordered. Over residues 207-219 (VKSEMAEHSDRSP) the composition is skewed to basic and acidic residues.

The protein belongs to the lin-28 family.

The protein localises to the nucleus. The protein resides in the nucleolus. In terms of biological role, suppressor of microRNA (miRNA) biogenesis, including that of let-7 and possibly of miR107, miR-143 and miR-200c. Binds primary let-7 transcripts (pri-let-7), including pri-let-7g and pri-let-7a-1, and sequester them in the nucleolus, away from the microprocessor complex, hence preventing their processing into mature miRNA. Does not act on pri-miR21. The repression of let-7 expression is required for normal development and contributes to maintain the pluripotent state of embryonic stem cells by preventing let-7-mediated differentiation. When overexpressed, recruits ZCCHC11/TUT4 uridylyltransferase to pre-let-7 transcripts, leading to their terminal uridylation and degradation. This activity might not be relevant in vivo, as LIN28B-mediated inhibition of let-7 miRNA maturation appears to be ZCCHC11-independent. Interaction with target pre-miRNAs occurs via an 5'-GGAG-3' motif in the pre-miRNA terminal loop. Mediates MYC-induced let-7 repression. When overexpressed, may stimulate growth of carcinoma cell lines. This Mus musculus (Mouse) protein is Protein lin-28 homolog B (Lin28b).